A 252-amino-acid chain; its full sequence is F-box/SPRY domain-containing protein 1 (252 aa).

Positions Met1 to His48 constitute an F-box domain. Residues Val58–Leu250 enclose the B30.2/SPRY domain.

The protein belongs to the FBXO45/Fsn family. In terms of assembly, component of an E3 ubiquitin ligase complex composed of hiw and Fsn.

The protein localises to the synapse. It functions in the pathway protein modification; protein ubiquitination. In terms of biological role, required in the presynaptic motoneuron to down-regulate the levels of wnd and restrain synaptic terminal growth at the neuromuscular junction (NMJ). The protein is F-box/SPRY domain-containing protein 1 of Drosophila virilis (Fruit fly).